The chain runs to 429 residues: D-amino acid dehydrogenase (429 aa).

Residue 3–17 participates in FAD binding; it reads VLILGSGVIGVTSAW.

This sequence belongs to the DadA oxidoreductase family. FAD is required as a cofactor.

The catalysed reaction is a D-alpha-amino acid + A + H2O = a 2-oxocarboxylate + AH2 + NH4(+). It functions in the pathway amino-acid degradation; D-alanine degradation; NH(3) and pyruvate from D-alanine: step 1/1. In terms of biological role, oxidative deamination of D-amino acids. This is D-amino acid dehydrogenase from Xanthomonas euvesicatoria pv. vesicatoria (strain 85-10) (Xanthomonas campestris pv. vesicatoria).